Here is a 490-residue protein sequence, read N- to C-terminus: Betaine aldehyde dehydrogenase (490 aa).

Residue Asp93 participates in K(+) binding. 150–152 (GAW) serves as a coordination point for NAD(+). Lys162 serves as the catalytic Charge relay system. Position 176 to 179 (176 to 179 (KPSE)) interacts with NAD(+). Val180 provides a ligand contact to K(+). 230 to 233 (GIAS) lines the NAD(+) pocket. Residue Leu246 participates in K(+) binding. The active-site Proton acceptor is the Glu252. The NAD(+) site is built by Gly254, Cys286, and Glu387. The Nucleophile role is filled by Cys286. Residue Cys286 is modified to Cysteine sulfenic acid (-SOH). K(+) contacts are provided by Lys457 and Gly460. Glu464 functions as the Charge relay system in the catalytic mechanism.

It belongs to the aldehyde dehydrogenase family. In terms of assembly, dimer of dimers. The cofactor is K(+).

The enzyme catalyses betaine aldehyde + NAD(+) + H2O = glycine betaine + NADH + 2 H(+). Its pathway is amine and polyamine biosynthesis; betaine biosynthesis via choline pathway; betaine from betaine aldehyde: step 1/1. In terms of biological role, involved in the biosynthesis of the osmoprotectant glycine betaine. Catalyzes the irreversible oxidation of betaine aldehyde to the corresponding acid. The chain is Betaine aldehyde dehydrogenase from Yersinia pseudotuberculosis serotype O:1b (strain IP 31758).